The following is a 256-amino-acid chain: Thiazole synthase (256 aa).

K96 functions as the Schiff-base intermediate with DXP in the catalytic mechanism. 1-deoxy-D-xylulose 5-phosphate-binding positions include G157, 183–184, and 205–206; these read AG and NT.

This sequence belongs to the ThiG family. As to quaternary structure, homotetramer. Forms heterodimers with either ThiH or ThiS.

It localises to the cytoplasm. It carries out the reaction [ThiS sulfur-carrier protein]-C-terminal-Gly-aminoethanethioate + 2-iminoacetate + 1-deoxy-D-xylulose 5-phosphate = [ThiS sulfur-carrier protein]-C-terminal Gly-Gly + 2-[(2R,5Z)-2-carboxy-4-methylthiazol-5(2H)-ylidene]ethyl phosphate + 2 H2O + H(+). It functions in the pathway cofactor biosynthesis; thiamine diphosphate biosynthesis. Catalyzes the rearrangement of 1-deoxy-D-xylulose 5-phosphate (DXP) to produce the thiazole phosphate moiety of thiamine. Sulfur is provided by the thiocarboxylate moiety of the carrier protein ThiS. In vitro, sulfur can be provided by H(2)S. This chain is Thiazole synthase, found in Bacillus mycoides (strain KBAB4) (Bacillus weihenstephanensis).